We begin with the raw amino-acid sequence, 335 residues long: ATP-dependent 6-phosphofructokinase (335 aa).

Glycine 11 is an ATP binding site. 21-25 (RAVVR) is a binding site for ADP. ATP-binding positions include 72 to 73 (RY) and 102 to 105 (GDGS). Aspartate 103 is a binding site for Mg(2+). Substrate is bound at residue 125-127 (TID). Aspartate 127 (proton acceptor) is an active-site residue. Residue arginine 154 coordinates ADP. Residues arginine 162 and 169–171 (MGR) each bind substrate. ADP-binding positions include 185 to 187 (GAD) and 213 to 215 (KKH). Substrate-binding positions include glutamate 222, arginine 244, and 250–253 (HIQR).

It belongs to the phosphofructokinase type A (PFKA) family. ATP-dependent PFK group I subfamily. Prokaryotic clade 'B1' sub-subfamily. As to quaternary structure, homotetramer. The cofactor is Mg(2+).

The protein localises to the cytoplasm. The catalysed reaction is beta-D-fructose 6-phosphate + ATP = beta-D-fructose 1,6-bisphosphate + ADP + H(+). It functions in the pathway carbohydrate degradation; glycolysis; D-glyceraldehyde 3-phosphate and glycerone phosphate from D-glucose: step 3/4. Its activity is regulated as follows. Allosterically activated by ADP and other diphosphonucleosides, and allosterically inhibited by phosphoenolpyruvate. In terms of biological role, catalyzes the phosphorylation of D-fructose 6-phosphate to fructose 1,6-bisphosphate by ATP, the first committing step of glycolysis. This Streptococcus pneumoniae serotype 19F (strain G54) protein is ATP-dependent 6-phosphofructokinase.